Here is a 670-residue protein sequence, read N- to C-terminus: Solute carrier organic anion transporter family member 1A3 (670 aa).

Residues 1–20 (MGDLEKGAATHGAGCFAKIK) are Cytoplasmic-facing. The chain crosses the membrane as a helical span at residues 21-40 (VFLMALTCAYVSKSLSGTFM). Residues 41 to 59 (SSMLTQIERQFGIPTAIVG) are Extracellular-facing. The chain crosses the membrane as a helical span at residues 60-80 (FINGSFEIGNLLLIIFVSYFG). Residues 81–86 (MKLHRP) lie on the Cytoplasmic side of the membrane. The chain crosses the membrane as a helical span at residues 87–111 (IVIGVGCAVMGLGCFIISLPHFLMG). Over 112-155 (RYEYETTILPTSNLSSNSFLCMENQTQTLNPAQDPAECVKEVKS) the chain is Extracellular. N-linked (GlcNAc...) asparagine glycans are attached at residues asparagine 124 and asparagine 135. Residues 156–184 (LMWIYVLVGNIIRGIGETPIMPLGVSYIE) form a helical membrane-spanning segment. Residues 185–203 (NFAKSENSPLYIGILETGK) lie on the Cytoplasmic side of the membrane. A helical transmembrane segment spans residues 204–224 (MIGPIFGLLLGSFCASIYVDT). Residues 225–242 (GSVNTDDLTITPTDIRWV) are Extracellular-facing. The helical transmembrane segment at 243–267 (GAWWIGFLVCAGVNILISIPFFFFP) threads the bilayer. At 268 to 311 (KTLPKEGLQENVDGTENAKEESTEKRPRKKNRGITKDFFPFLKS) the chain is on the cytoplasmic side. Residues 277–296 (ENVDGTENAKEESTEKRPRK) form a disordered region. Basic and acidic residues predominate over residues 283 to 292 (ENAKEESTEK). A helical membrane pass occupies residues 312–333 (PVLQPDLHAVHPYKVLQVNAFN). Residues 334–353 (IYFSFLPKYLENQYGKSTAE) are Extracellular-facing. Residues 354–377 (VIFLMGVYNLPAICIGYLIAGFMM) form a helical membrane-spanning segment. Over 378–381 (KKFK) the chain is Cytoplasmic. Residues 382–405 (ITVKTAAFLAFCLSLSEYSFGFCN) form a helical membrane-spanning segment. At 406–513 (FLITCDNVPV…PECTNKLQYL (108 aa)) the chain is on the extracellular side. The Kazal-like domain maps to 433–488 (NNVLADCNTRCSCLTKTWDPVCGDNGLAYMSACLAGCEKSVGTGTNMVFHNCSCIQ). Intrachain disulfides connect cysteine 439–cysteine 469, cysteine 445–cysteine 465, and cysteine 454–cysteine 486. N-linked (GlcNAc...) asparagine glycans are attached at residues asparagine 483 and asparagine 492. A helical transmembrane segment spans residues 514–536 (LILSGFLSILYSFAAIPGYMVFL). Residues 537–545 (RCIKSEEKS) lie on the Cytoplasmic side of the membrane. A helical transmembrane segment spans residues 546–571 (LGIGIHAFCIRVFAGIPAPIYFGALI). Topologically, residues 572-605 (DRTCLHWGTQKCGAPGACRMYDINSFRRIYLGMS) are extracellular. Residues 606-623 (AALRGSSYLPAFVIVILT) form a helical membrane-spanning segment. Residues 624 to 670 (RKFSLPGKINSSEMEIAEMKLTEKESQCTDVHRNPKFKNDGELKTKL) lie on the Cytoplasmic side of the membrane.

It belongs to the organo anion transporter (TC 2.A.60) family. All isoforms are detected in kidney, and many are kidney specific. Isoforms 2 and 13 are also detected in liver. Isoforms 4 and 9/K4 are ubiquitous, but isoform 9/K13 is kidney specific. Isoforms 5 and 14 are detected in all tissues tested, with the exception of pancreas and spleen. Isoforms 11 and 15 are detected in kidney, pancreas and testis. Isoform 7 is detected in kidney, liver, testis and spleen.

The protein localises to the cell membrane. Mediates the Na(+)-independent transport of organic anions such as methotrexate, taurocholate, folate and prostaglandin E2. May contribute to renal secretion and/or reabsorption of hydrophobic anionic compounds. Mediates renal clearance of methotrexate from the blood. This Rattus norvegicus (Rat) protein is Solute carrier organic anion transporter family member 1A3 (Slco1a3).